A 253-amino-acid chain; its full sequence is Retinoic acid early-inducible protein 1-gamma (253 aa).

The N-terminal stretch at 1 to 28 (MAKAAVTKRHHFMIQKLLILLSYGYTNG) is a signal peptide. A disulfide bond links Cys-37 and Cys-56. N-linked (GlcNAc...) asparagine glycans are attached at residues Asn-38, Asn-70, Asn-83, Asn-143, and Asn-156. Cys-90 and Cys-190 are joined by a disulfide. Positions 198-230 (LKQSKEKPRSTSRSPSITQLTSTSPLPPPSHST) are disordered. A compositionally biased stretch (low complexity) spans 211–221 (SPSITQLTSTS). Ser-227 carries GPI-anchor amidated serine lipidation. A propeptide spans 228 to 253 (HSTSKKGFISVGLIFISLLFAFAFAM) (removed in mature form).

This sequence belongs to the NKG2D ligand family. Post-translationally, glycosylated. In terms of tissue distribution, expressed predominantly in embryonic brain.

Its subcellular location is the cell membrane. In terms of biological role, acts as a ligand for KLRK1. This chain is Retinoic acid early-inducible protein 1-gamma (Raet1c), found in Mus musculus (Mouse).